We begin with the raw amino-acid sequence, 207 residues long: Large ribosomal subunit protein uL4 (207 aa).

Residues 45 to 89 form a disordered region; sequence RQGTHKVKTRSEVRGGGRKPWRQKGTGRARQGSIRSPQWRGGGTV. Positions 60–71 are enriched in basic residues; that stretch reads GGRKPWRQKGTG.

This sequence belongs to the universal ribosomal protein uL4 family. As to quaternary structure, part of the 50S ribosomal subunit.

Functionally, one of the primary rRNA binding proteins, this protein initially binds near the 5'-end of the 23S rRNA. It is important during the early stages of 50S assembly. It makes multiple contacts with different domains of the 23S rRNA in the assembled 50S subunit and ribosome. Its function is as follows. Forms part of the polypeptide exit tunnel. This chain is Large ribosomal subunit protein uL4, found in Bacillus anthracis (strain A0248).